A 343-amino-acid chain; its full sequence is Holliday junction branch migration complex subunit RuvB (343 aa).

The large ATPase domain (RuvB-L) stretch occupies residues 4–193; sequence TDNLTAAQPQ…FGIVSRLEFY (190 aa). Residues Leu-32, Arg-33, Gly-74, Lys-77, Thr-78, Thr-79, 140 to 142, Arg-183, Tyr-193, and Arg-230 each bind ATP; that span reads EDY. Thr-78 is a Mg(2+) binding site. Residues 194 to 264 are small ATPAse domain (RuvB-S); that stretch reads ENRDLTTIVS…VADAALSMLD (71 aa). Positions 267-343 are head domain (RuvB-H); the sequence is AQGLDVMDRK…YLHFGLPVEK (77 aa). Residues Arg-322 and Arg-327 each contribute to the DNA site.

The protein belongs to the RuvB family. In terms of assembly, homohexamer. Forms an RuvA(8)-RuvB(12)-Holliday junction (HJ) complex. HJ DNA is sandwiched between 2 RuvA tetramers; dsDNA enters through RuvA and exits via RuvB. An RuvB hexamer assembles on each DNA strand where it exits the tetramer. Each RuvB hexamer is contacted by two RuvA subunits (via domain III) on 2 adjacent RuvB subunits; this complex drives branch migration. In the full resolvosome a probable DNA-RuvA(4)-RuvB(12)-RuvC(2) complex forms which resolves the HJ.

The protein localises to the cytoplasm. It carries out the reaction ATP + H2O = ADP + phosphate + H(+). In terms of biological role, the RuvA-RuvB-RuvC complex processes Holliday junction (HJ) DNA during genetic recombination and DNA repair, while the RuvA-RuvB complex plays an important role in the rescue of blocked DNA replication forks via replication fork reversal (RFR). RuvA specifically binds to HJ cruciform DNA, conferring on it an open structure. The RuvB hexamer acts as an ATP-dependent pump, pulling dsDNA into and through the RuvAB complex. RuvB forms 2 homohexamers on either side of HJ DNA bound by 1 or 2 RuvA tetramers; 4 subunits per hexamer contact DNA at a time. Coordinated motions by a converter formed by DNA-disengaged RuvB subunits stimulates ATP hydrolysis and nucleotide exchange. Immobilization of the converter enables RuvB to convert the ATP-contained energy into a lever motion, pulling 2 nucleotides of DNA out of the RuvA tetramer per ATP hydrolyzed, thus driving DNA branch migration. The RuvB motors rotate together with the DNA substrate, which together with the progressing nucleotide cycle form the mechanistic basis for DNA recombination by continuous HJ branch migration. Branch migration allows RuvC to scan DNA until it finds its consensus sequence, where it cleaves and resolves cruciform DNA. The polypeptide is Holliday junction branch migration complex subunit RuvB (Neisseria gonorrhoeae (strain NCCP11945)).